Consider the following 394-residue polypeptide: 12-oxophytodienoate reductase 7 (394 aa).

FMN-binding positions include 35-37 (PMT) and Gln-110. 189 to 192 (HGAH) is a substrate binding site. Tyr-194 acts as the Proton donor in catalysis. Residue Arg-241 coordinates FMN. Position 286 (Arg-286) interacts with substrate. FMN contacts are provided by residues Gly-324 and 345–346 (GR). Residues 392-394 (SRM) carry the Microbody targeting signal motif.

Belongs to the NADH:flavin oxidoreductase/NADH oxidase family. It depends on FMN as a cofactor.

The protein resides in the peroxisome. The enzyme catalyses (1S,2S)-OPC-8 + NADP(+) = (9S,13S,15Z)-12-oxophyto-10,15-dienoate + NADPH + H(+). It functions in the pathway lipid metabolism; oxylipin biosynthesis. Functionally, involved in the biosynthesis of jasmonate (JA) and perhaps in biosynthesis or metabolism of other oxylipin signaling moleclules. In vitro, reduces cis(+)-12-oxophytodienoic acid (cis(+)-OPDA) and cis(-)-OPDA to cis(+)-OPC-8:0 and cis(-)-OPC-8:0, respectively. May be required for the spatial and temporal regulation of JA levels during dehiscence of anthers, promoting the stomium degeneration program. Involved in carbohydrate transport underlying normal lodicule function during anthesis. In Oryza sativa subsp. japonica (Rice), this protein is 12-oxophytodienoate reductase 7.